We begin with the raw amino-acid sequence, 173 residues long: Probable capsid assembly scaffolding protein (173 aa).

Low complexity predominate over residues 1–13; the sequence is MSDNPTPESTPEA. Residues 1-27 are disordered; it reads MSDNPTPESTPEAETPEVEKPMEPQGK. The stretch at 36–84 forms a coiled coil; it reads SLRQEAAAARVAKKDAVEAAEARVKAEYEAKLAERDTAYTELQNQLGQA. Positions 134-158 are disordered; sequence GNKTPSPAFDPSQGRGGKPPIPLNG.

It belongs to the L5likevirus scaffolding protein family.

Scaffolding protein involved in the icosahedric procapsid assembly. Coassembles with the capsid proteins to form the procapsid, in which the scaffolding protein is found within the external shell of icosahedrally arranged capsid protein subunits. This is Probable capsid assembly scaffolding protein (16) from Mycobacterium (Mycobacteriophage L5).